A 584-amino-acid chain; its full sequence is Arginine--tRNA ligase (584 aa).

Positions 129–139 (ANPTGPLHVGH) match the 'HIGH' region motif.

This sequence belongs to the class-I aminoacyl-tRNA synthetase family. In terms of assembly, monomer.

The protein localises to the cytoplasm. It catalyses the reaction tRNA(Arg) + L-arginine + ATP = L-arginyl-tRNA(Arg) + AMP + diphosphate. The sequence is that of Arginine--tRNA ligase from Halorhodospira halophila (strain DSM 244 / SL1) (Ectothiorhodospira halophila (strain DSM 244 / SL1)).